The following is a 458-amino-acid chain: Flavohemoprotein (458 aa).

In terms of domain architecture, Globin spans 2–158 (TLSEDTLRAV…LADLFIKREE (157 aa)). A heme b-binding site is contributed by histidine 107. Active-site charge relay system residues include tyrosine 117 and glutamate 157. Residues 169–457 (GGWRQTRTFR…FEMFGPFKAS (289 aa)) are reductase. The region spanning 172–279 (RQTRTFRVEE…APPYGDFFLR (108 aa)) is the FAD-binding FR-type domain. Residues tyrosine 211 and 228–231 (RQYS) contribute to the FAD site. Position 321–326 (321–326 (GIGQTP)) interacts with NADP(+). Position 450–453 (450–453 (MFGP)) interacts with FAD.

It belongs to the globin family. Two-domain flavohemoproteins subfamily. In the C-terminal section; belongs to the flavoprotein pyridine nucleotide cytochrome reductase family. As to quaternary structure, monomer. The cofactor is heme b. It depends on FAD as a cofactor.

The catalysed reaction is 2 nitric oxide + NADPH + 2 O2 = 2 nitrate + NADP(+) + H(+). It catalyses the reaction 2 nitric oxide + NADH + 2 O2 = 2 nitrate + NAD(+) + H(+). Functionally, flavohemoprotein involved in nitric oxide (NO) detoxification in an aerobic process, termed nitric oxide dioxygenase (NOD) reaction that utilizes O(2) and NAD(P)H to convert NO to nitrate, which protects the protozoan parasite from various noxious nitrogen compounds. Therefore, plays a central role in the inducible response to nitrosative stress. May also be involved in O(2) detoxification. The protein is Flavohemoprotein (hmpA) of Giardia intestinalis (strain ATCC 50803 / WB clone C6) (Giardia lamblia).